A 90-amino-acid chain; its full sequence is UPF0335 protein Smed_2680 (90 aa).

Belongs to the UPF0335 family.

This Sinorhizobium medicae (strain WSM419) (Ensifer medicae) protein is UPF0335 protein Smed_2680.